Consider the following 319-residue polypeptide: Methionyl-tRNA formyltransferase (319 aa).

113–116 (SLLP) serves as a coordination point for (6S)-5,6,7,8-tetrahydrofolate.

The protein belongs to the Fmt family.

It catalyses the reaction L-methionyl-tRNA(fMet) + (6R)-10-formyltetrahydrofolate = N-formyl-L-methionyl-tRNA(fMet) + (6S)-5,6,7,8-tetrahydrofolate + H(+). Functionally, attaches a formyl group to the free amino group of methionyl-tRNA(fMet). The formyl group appears to play a dual role in the initiator identity of N-formylmethionyl-tRNA by promoting its recognition by IF2 and preventing the misappropriation of this tRNA by the elongation apparatus. This chain is Methionyl-tRNA formyltransferase, found in Pseudomonas fluorescens (strain Pf0-1).